Consider the following 192-residue polypeptide: NAD(P)H-quinone oxidoreductase subunit J, organellar chromatophore (192 aa).

It belongs to the complex I 30 kDa subunit family. NDH is composed of at least 16 different subunits, 5 of which are encoded in the nucleus.

It localises to the plastid. Its subcellular location is the organellar chromatophore thylakoid membrane. It catalyses the reaction a quinone + NADH + H(+) = a quinol + NAD(+). Its function is as follows. NDH-1 shuttles electrons from NADH, via FMN and iron-sulfur (Fe-S) centers, to quinones in the respiratory chain. Couples the redox reaction to proton translocation (for every two electrons transferred, four hydrogen ions are translocated across the cytoplasmic membrane), and thus conserves the redox energy in a proton gradient. This chain is NAD(P)H-quinone oxidoreductase subunit J, organellar chromatophore, found in Paulinella chromatophora.